The following is a 289-amino-acid chain: Phosphatidylglycerol--prolipoprotein diacylglyceryl transferase (289 aa).

3 helical membrane-spanning segments follow: residues 13–33 (LGPL…LLGW), 61–81 (FILW…VLFY), and 99–119 (GGMS…LFAM). A 1,2-diacyl-sn-glycero-3-phospho-(1'-sn-glycerol) is bound at residue R144. A run of 2 helical transmembrane segments spans residues 218 to 238 (GVVM…LENV) and 250 to 270 (LGLT…LWLI).

The protein belongs to the Lgt family.

Its subcellular location is the cell inner membrane. The enzyme catalyses L-cysteinyl-[prolipoprotein] + a 1,2-diacyl-sn-glycero-3-phospho-(1'-sn-glycerol) = an S-1,2-diacyl-sn-glyceryl-L-cysteinyl-[prolipoprotein] + sn-glycerol 1-phosphate + H(+). Its pathway is protein modification; lipoprotein biosynthesis (diacylglyceryl transfer). Functionally, catalyzes the transfer of the diacylglyceryl group from phosphatidylglycerol to the sulfhydryl group of the N-terminal cysteine of a prolipoprotein, the first step in the formation of mature lipoproteins. The polypeptide is Phosphatidylglycerol--prolipoprotein diacylglyceryl transferase (Phenylobacterium zucineum (strain HLK1)).